The chain runs to 154 residues: Transcriptional repressor NrdR (154 aa).

The segment at 3–34 (CPFCTHPDTRVADSRLMEERNAVRRRRHCPNC) is a zinc-finger region. In terms of domain architecture, ATP-cone spans 49–139 (PAVIGPDKKR…LHKRFDNPAD (91 aa)).

This sequence belongs to the NrdR family. Requires Zn(2+) as cofactor.

In terms of biological role, negatively regulates transcription of bacterial ribonucleotide reductase nrd genes and operons by binding to NrdR-boxes. The sequence is that of Transcriptional repressor NrdR from Neisseria meningitidis serogroup A / serotype 4A (strain DSM 15465 / Z2491).